The primary structure comprises 72 residues: DNA-directed RNA polymerase subunit Rpo10 (72 aa).

4 residues coordinate Zn(2+): Cys7, Cys10, Cys53, and Cys54.

The protein belongs to the archaeal Rpo10/eukaryotic RPB10 RNA polymerase subunit family. Part of the RNA polymerase complex. Zn(2+) serves as cofactor.

It is found in the cytoplasm. The enzyme catalyses RNA(n) + a ribonucleoside 5'-triphosphate = RNA(n+1) + diphosphate. Its function is as follows. DNA-dependent RNA polymerase (RNAP) catalyzes the transcription of DNA into RNA using the four ribonucleoside triphosphates as substrates. This is DNA-directed RNA polymerase subunit Rpo10 from Thermoplasma acidophilum (strain ATCC 25905 / DSM 1728 / JCM 9062 / NBRC 15155 / AMRC-C165).